Reading from the N-terminus, the 486-residue chain is Small ribosomal subunit protein uS17B (486 aa).

A 30S ribosomal protein S17 region spans residues 1 to 112 (MRDIGINGIK…IENKSNINFV (112 aa)). Residues 113–486 (DNLLNVDDKW…ELWTRKNYKS (374 aa)) form a unknown region.

It belongs to the universal ribosomal protein uS17 family. In terms of assembly, part of the 30S ribosomal subunit.

Its function is as follows. One of the primary rRNA binding proteins, it binds specifically to the 5'-end of 16S ribosomal RNA. The sequence is that of Small ribosomal subunit protein uS17B from Methanosarcina acetivorans (strain ATCC 35395 / DSM 2834 / JCM 12185 / C2A).